Here is a 244-residue protein sequence, read N- to C-terminus: tRNA (guanine-N(1)-)-methyltransferase (244 aa).

Residues glycine 113 and isoleucine 133–leucine 138 contribute to the S-adenosyl-L-methionine site.

Belongs to the RNA methyltransferase TrmD family. Homodimer.

Its subcellular location is the cytoplasm. The catalysed reaction is guanosine(37) in tRNA + S-adenosyl-L-methionine = N(1)-methylguanosine(37) in tRNA + S-adenosyl-L-homocysteine + H(+). Specifically methylates guanosine-37 in various tRNAs. The sequence is that of tRNA (guanine-N(1)-)-methyltransferase from Bacillus anthracis (strain A0248).